Reading from the N-terminus, the 729-residue chain is Circadian input-output histidine kinase CikA (729 aa).

The tract at residues 1–169 is N-terminal domain; that stretch reads MPQPIFDRIL…QVTTQIRQSL (169 aa). The GAF domain stretch occupies residues 170 to 314; that stretch reads ELPELLKIAV…VEFLTHLSQH (145 aa). Positions 366–587 constitute a Histidine kinase domain; the sequence is TMSHELRTPL…TFTVGLPAIS (222 aa). Histidine 369 carries the phosphohistidine; by autocatalysis modification. A psR domain, binds KaiB region spans residues 613 to 729; the sequence is EGRIVLVSED…GLTSLATSAQ (117 aa).

In the N-terminal section; belongs to the phytochrome family. As to quaternary structure, homodimer. Part of the circadian clock (KaiA, KaiB, KaiC, CikA, RpaA, SasA), the composition of which varies during the circadian cycle. KaiA and CikA compete for binding to KaiB(fs). The PsR domain binds the KaiB:KaiC CI complex but poorly to either protein alone. KaiA and CikA bind to the same region of the KaiB(fs) form and therefore compete.

The enzyme catalyses ATP + protein L-histidine = ADP + protein N-phospho-L-histidine.. Functions in an input pathway to the Kai circadian clock. Senses oxidized quinones via its C-terminal pseudo-receiver domain, providing a link between cell metabolism and the clock. Affects the ratio of phosphorylated to unphosphorylated KaiC, binds quinones via its pseudo-receptor domain. Quinone-binding destabilizes the protein rapidly. Autophosphorylates, does not transfer the phosphate to its pseudo-receiver (PsR) domain. May play a role in cell division. Its function is as follows. Also functions in a two-component CikA/RpaA output pathway from the circadian clock, negatively regulating kaiBC expression independently of labA and of sasA. One of three clock output pathways. Dephosphorylates phospho-RpaA, enhanced by KaiB and KaiC, has only modest kinase activity on RpaA. The chain is Circadian input-output histidine kinase CikA from Thermosynechococcus vestitus (strain NIES-2133 / IAM M-273 / BP-1).